Consider the following 122-residue polypeptide: Large ribosomal subunit protein uL14 (122 aa).

It belongs to the universal ribosomal protein uL14 family. Part of the 50S ribosomal subunit. Forms a cluster with proteins L3 and L19. In the 70S ribosome, L14 and L19 interact and together make contacts with the 16S rRNA in bridges B5 and B8.

Binds to 23S rRNA. Forms part of two intersubunit bridges in the 70S ribosome. This chain is Large ribosomal subunit protein uL14, found in Agrobacterium fabrum (strain C58 / ATCC 33970) (Agrobacterium tumefaciens (strain C58)).